A 522-amino-acid polypeptide reads, in one-letter code: Ribonuclease Y (522 aa).

The chain crosses the membrane as a helical span at residues 7-23 (SGSSAAVISGLVGFYIS). The region spanning 212–278 (LTNLVHLNDD…TKTLELLIQD (67 aa)) is the KH domain. Residues 338–431 (ALSHTLEVAH…VCAADALSAA (94 aa)) form the HD domain.

The protein belongs to the RNase Y family.

It localises to the cell membrane. Endoribonuclease that initiates mRNA decay. The polypeptide is Ribonuclease Y (Sulfurimonas denitrificans (strain ATCC 33889 / DSM 1251) (Thiomicrospira denitrificans (strain ATCC 33889 / DSM 1251))).